Reading from the N-terminus, the 54-residue chain is MASKKGNRIVIKLKSTESGHTYTTEKNRRNDPSRLELRKYDPIVRRHVLYRETK.

This sequence belongs to the bacterial ribosomal protein bL33 family.

The sequence is that of Large ribosomal subunit protein bL33 from Chloroflexus aurantiacus (strain ATCC 29366 / DSM 635 / J-10-fl).